The following is a 255-amino-acid chain: Syntaxin-6 (255 aa).

S2 carries the post-translational modification N-acetylserine. S2 carries the phosphoserine modification. The tract at residues 2–112 (SMEDPFFVVK…KDQMSASSVQ (111 aa)) is interaction with BLTP3B. The required for interaction with VPS51 stretch occupies residues 2 to 168 (SMEDPFFVVK…QAQQQLIVEQ (167 aa)). Residues 2 to 234 (SMEDPFFVVK…VSHMTSDRRQ (233 aa)) are Cytoplasmic-facing. Residues 41–74 (EEIDWTTNELRNNLRSIEWDLEDLDETISIVEAN) are a coiled coil. Phosphoserine is present on residues S129 and S152. Positions 163 to 225 (QLIVEQQDEQ…DNVMKKLAKV (63 aa)) constitute a t-SNARE coiled-coil homology domain. Residues 235–255 (WCAIAILFAVLLVVLTLFLVL) traverse the membrane as a helical; Anchor for type IV membrane protein segment.

Belongs to the syntaxin family. As to quaternary structure, identified in a complex containing STX6, STX12, VAMP4 and VTI1A. Binds EEA1. Interacts with VPS45A and GOPC. Interacts with MARCHF2; the interaction promotes MARCHF2-mediated ubiquitination and degradation of CFTR. Interacts with MARCHF3. Interacts with BLTP3B (via C-terminal coiled-coil domain). Interacts with BAIAP3; this interaction is increased in the presence of calcium. Interacts (via N-terminus) with VPS51. Interacts with VPS13B. As to expression, widely expressed, with relatively higher expression in brain, lung and kidney.

It localises to the golgi apparatus membrane. The protein resides in the golgi apparatus. Its subcellular location is the trans-Golgi network membrane. The protein localises to the recycling endosome membrane. Functionally, SNARE promoting movement of transport vesicles to target membranes. Targets endosomes to the trans-Golgi network, and may therefore function in retrograde trafficking. Together with SNARE STX12, promotes movement of vesicles from endosomes to the cell membrane, and may therefore function in the endocytic recycling pathway. The chain is Syntaxin-6 (Stx6) from Rattus norvegicus (Rat).